We begin with the raw amino-acid sequence, 481 residues long: Proline--tRNA ligase (481 aa).

Belongs to the class-II aminoacyl-tRNA synthetase family. ProS type 3 subfamily. Homodimer.

It localises to the cytoplasm. The enzyme catalyses tRNA(Pro) + L-proline + ATP = L-prolyl-tRNA(Pro) + AMP + diphosphate. Functionally, catalyzes the attachment of proline to tRNA(Pro) in a two-step reaction: proline is first activated by ATP to form Pro-AMP and then transferred to the acceptor end of tRNA(Pro). This is Proline--tRNA ligase from Saccharolobus islandicus (strain Y.N.15.51 / Yellowstone #2) (Sulfolobus islandicus).